The primary structure comprises 472 residues: Ribulose bisphosphate carboxylase large chain (472 aa).

Substrate contacts are provided by asparagine 120 and threonine 170. Lysine 172 acts as the Proton acceptor in catalysis. Residue lysine 174 coordinates substrate. Mg(2+)-binding residues include lysine 198, aspartate 200, and glutamate 201. Lysine 198 is subject to N6-carboxylysine. Histidine 291 acts as the Proton acceptor in catalysis. Substrate is bound by residues arginine 292, histidine 324, and serine 376. The Interacts with RbcX2 motif lies at 461–467; the sequence is EIKFEFE.

It belongs to the RuBisCO large chain family. Type I subfamily. As to quaternary structure, heterohexadecamer of 8 large chains and 8 small chains; disulfide-linked. The disulfide link is formed within the large subunit homodimers. The exposed C-terminus binds in a cleft in the RbcX2 (shown with endogenous and Anabaena strain CA protein). RbcX2 is displaced by RbcS; as RbcX2 is removed RbcS mediates the ordering of an internal RbcL loop (Thr-64-Leu-70) in a catalytically active conformation. Mg(2+) is required as a cofactor. In terms of processing, the disulfide bond which can form in the large chain dimeric partners within the hexadecamer appears to be associated with oxidative stress and protein turnover.

It is found in the carboxysome. The enzyme catalyses 2 (2R)-3-phosphoglycerate + 2 H(+) = D-ribulose 1,5-bisphosphate + CO2 + H2O. It catalyses the reaction D-ribulose 1,5-bisphosphate + O2 = 2-phosphoglycolate + (2R)-3-phosphoglycerate + 2 H(+). In terms of biological role, ruBisCO catalyzes two reactions: the carboxylation of D-ribulose 1,5-bisphosphate, the primary event in carbon dioxide fixation, as well as the oxidative fragmentation of the pentose substrate in the photorespiration process. Both reactions occur simultaneously and in competition at the same active site. This is Ribulose bisphosphate carboxylase large chain (cbbL) from Synechococcus sp. (strain ATCC 27144 / PCC 6301 / SAUG 1402/1) (Anacystis nidulans).